A 337-amino-acid chain; its full sequence is GTPase Obg (337 aa).

An Obg domain is found at 1 to 158 (MFVDRVIIEL…HHIELELKLI (158 aa)). Positions 159–330 (ADVGLVGFPN…LIEKMTQRLS (172 aa)) constitute an OBG-type G domain. GTP-binding positions include 165-172 (GFPNAGKS), 190-194 (FTTLQ), 212-215 (DIPG), 282-285 (NKID), and 311-313 (SAV). Ser172 and Thr192 together coordinate Mg(2+).

Belongs to the TRAFAC class OBG-HflX-like GTPase superfamily. OBG GTPase family. As to quaternary structure, monomer. Requires Mg(2+) as cofactor.

The protein resides in the cytoplasm. In terms of biological role, an essential GTPase which binds GTP, GDP and possibly (p)ppGpp with moderate affinity, with high nucleotide exchange rates and a fairly low GTP hydrolysis rate. Plays a role in control of the cell cycle, stress response, ribosome biogenesis and in those bacteria that undergo differentiation, in morphogenesis control. The protein is GTPase Obg of Protochlamydia amoebophila (strain UWE25).